The following is a 1133-amino-acid chain: Nuclear pore complex-interacting protein family member B5 (1133 aa).

A helical membrane pass occupies residues 60–84 (WLHVIIAFPTSYKVVITLWIVYLWV). Disordered stretches follow at residues 241–262 (NRMGHQPPPPTQQHSITDNSLS), 290–575 (LTPL…IKTP), and 868–1133 (ERLR…RRLS). Residues 252-262 (QQHSITDNSLS) are compositionally biased toward polar residues. Positions 349-359 (PLPPSALPSAP) are enriched in pro residues. 7 stretches are compositionally biased toward basic and acidic residues: residues 406-416 (DNIKTPAERLR), 448-458 (DNIKTPAERLR), 490-500 (DNIKTPAERLR), 528-538 (DNIKTPAERLR), 903-913 (DNIKTPAERLR), 945-955 (DNIKTPAERLR), and 987-997 (DNIKTPAERLR).

Belongs to the NPIP family.

It localises to the membrane. In Homo sapiens (Human), this protein is Nuclear pore complex-interacting protein family member B5 (NPIPB5).